We begin with the raw amino-acid sequence, 147 residues long: Cytochrome c-type biogenesis protein CcmE (147 aa).

Topologically, residues 1-9 (MKSLKKQRR) are cytoplasmic. The helical; Signal-anchor for type II membrane protein transmembrane segment at 10-30 (IQIIALATVALVGSTALIGYA) threads the bilayer. At 31-147 (MRDGINYFRS…EQGVYREGDS (117 aa)) the chain is on the periplasmic side. 2 residues coordinate heme: His123 and Tyr127.

The protein belongs to the CcmE/CycJ family.

Its subcellular location is the cell inner membrane. Heme chaperone required for the biogenesis of c-type cytochromes. Transiently binds heme delivered by CcmC and transfers the heme to apo-cytochromes in a process facilitated by CcmF and CcmH. The protein is Cytochrome c-type biogenesis protein CcmE of Ruegeria sp. (strain TM1040) (Silicibacter sp.).